The following is a 207-amino-acid chain: Cytochrome c biogenesis ATP-binding export protein CcmA (207 aa).

Residues 4–207 enclose the ABC transporter domain; sequence LEVRELLCER…RISLTQTRAV (204 aa). 36–43 serves as a coordination point for ATP; sequence GSNGAGKT.

Belongs to the ABC transporter superfamily. CcmA exporter (TC 3.A.1.107) family. The complex is composed of two ATP-binding proteins (CcmA) and two transmembrane proteins (CcmB).

The protein resides in the cell inner membrane. It catalyses the reaction heme b(in) + ATP + H2O = heme b(out) + ADP + phosphate + H(+). Its function is as follows. Part of the ABC transporter complex CcmAB involved in the biogenesis of c-type cytochromes; once thought to export heme, this seems not to be the case, but its exact role is uncertain. Responsible for energy coupling to the transport system. In Escherichia coli O157:H7, this protein is Cytochrome c biogenesis ATP-binding export protein CcmA.